We begin with the raw amino-acid sequence, 446 residues long: MSFSAIGDCQLISQLYQYKKHRVICSVKVLPTPVTHFERESKNDFHWMTADRWSRIECGLWRLFENLKQWQDAYQLDTELIIDHIIVRVQATNKSHPATVALLAGTESSSKDLCLDLQLQYITQEDTTIVDVIPAKRELATEAETNGTRPTSRKIRVANSGSKPKAGTQSKPKHIDADNEDDKSSTTASQPTKIKSERRSISQGGEKDKASSSSPSSSQQSNRIKRSHSPSQQNSRSSSVEAKPARRSGRSPIRPSRFKNFVVGETRSGKSRGPKPKVKRVSPVPAKDFKVEHMDGGRFNALQRLDSMLDTPKPREVKILLLEKMGEDEVLNTFENYRSDFDKLFKEREFKPRTSHYMNIAHMDVIDILSKSIHQQMLKKLGEVYSSRSNHTSLLVNGLLPLWIVRLFMDTYTLSQSEAVQQIRDQMKYNTYLRALNDEPLSSDLD.

The tract at residues 141 to 282 is disordered; that stretch reads TEAETNGTRP…GPKPKVKRVS (142 aa). The segment covering 159–170 has biased composition (polar residues); that stretch reads NSGSKPKAGTQS. A compositionally biased stretch (basic and acidic residues) spans 194–210; sequence IKSERRSISQGGEKDKA. Phosphoserine occurs at positions 200, 202, 212, and 214. Composition is skewed to low complexity over residues 211 to 221 and 229 to 239; these read SSSSPSSSQQS and SPSQQNSRSSS. S251 carries the post-translational modification Phosphoserine. Basic residues predominate over residues 269 to 280; the sequence is GKSRGPKPKVKR. S282 and S307 each carry phosphoserine.

This is an uncharacterized protein from Drosophila melanogaster (Fruit fly).